A 144-amino-acid chain; its full sequence is Transcriptional regulator MraZ (144 aa).

SpoVT-AbrB domains are found at residues 5-47 (TYTP…PRAE) and 77-120 (TDEQ…DAQA).

This sequence belongs to the MraZ family. As to quaternary structure, forms oligomers.

The protein resides in the cytoplasm. The protein localises to the nucleoid. The polypeptide is Transcriptional regulator MraZ (Mycolicibacterium vanbaalenii (strain DSM 7251 / JCM 13017 / BCRC 16820 / KCTC 9966 / NRRL B-24157 / PYR-1) (Mycobacterium vanbaalenii)).